Reading from the N-terminus, the 230-residue chain is 7-cyano-7-deazaguanine synthase (230 aa).

16 to 26 (LSGGLDSMVSG) is an ATP binding site. Residues C195, C205, C208, and C211 each contribute to the Zn(2+) site.

This sequence belongs to the QueC family. Zn(2+) is required as a cofactor.

The catalysed reaction is 7-carboxy-7-deazaguanine + NH4(+) + ATP = 7-cyano-7-deazaguanine + ADP + phosphate + H2O + H(+). Its pathway is purine metabolism; 7-cyano-7-deazaguanine biosynthesis. In terms of biological role, catalyzes the ATP-dependent conversion of 7-carboxy-7-deazaguanine (CDG) to 7-cyano-7-deazaguanine (preQ(0)). The protein is 7-cyano-7-deazaguanine synthase of Rhizorhabdus wittichii (strain DSM 6014 / CCUG 31198 / JCM 15750 / NBRC 105917 / EY 4224 / RW1) (Sphingomonas wittichii).